We begin with the raw amino-acid sequence, 267 residues long: 4-hydroxy-tetrahydrodipicolinate reductase (267 aa).

NAD(+) contacts are provided by residues 9-14 (GASGRM) and Asp-35. An NADP(+)-binding site is contributed by Arg-36. Residues 98–100 (GTT) and 122–125 (ASNF) contribute to the NAD(+) site. His-155 (proton donor/acceptor) is an active-site residue. His-156 is a (S)-2,3,4,5-tetrahydrodipicolinate binding site. The active-site Proton donor is Lys-159. 165-166 (GT) contacts (S)-2,3,4,5-tetrahydrodipicolinate.

It belongs to the DapB family.

Its subcellular location is the cytoplasm. It catalyses the reaction (S)-2,3,4,5-tetrahydrodipicolinate + NAD(+) + H2O = (2S,4S)-4-hydroxy-2,3,4,5-tetrahydrodipicolinate + NADH + H(+). The enzyme catalyses (S)-2,3,4,5-tetrahydrodipicolinate + NADP(+) + H2O = (2S,4S)-4-hydroxy-2,3,4,5-tetrahydrodipicolinate + NADPH + H(+). The protein operates within amino-acid biosynthesis; L-lysine biosynthesis via DAP pathway; (S)-tetrahydrodipicolinate from L-aspartate: step 4/4. Functionally, catalyzes the conversion of 4-hydroxy-tetrahydrodipicolinate (HTPA) to tetrahydrodipicolinate. The protein is 4-hydroxy-tetrahydrodipicolinate reductase of Chromobacterium violaceum (strain ATCC 12472 / DSM 30191 / JCM 1249 / CCUG 213 / NBRC 12614 / NCIMB 9131 / NCTC 9757 / MK).